The chain runs to 210 residues: Cytochrome c4 (210 aa).

An N-terminal signal peptide occupies residues 1 to 20 (MNKALVTLLLTLGITGLAHA). Positions 34, 37, 38, 86, 139, 142, 143, and 187 each coordinate heme c.

Binds 2 heme c groups covalently per subunit.

It is found in the periplasm. Diheme, high potential cytochrome c believed to be an intermediate electron donor to terminal oxidation systems. The chain is Cytochrome c4 (cycA) from Azotobacter vinelandii.